A 430-amino-acid chain; its full sequence is Phosphomethylpyrimidine synthase (430 aa).

Substrate-binding positions include Asn-68, Met-96, Tyr-125, His-164, 186–188 (SRG), 227–230 (DALR), and Glu-266. His-270 is a binding site for Zn(2+). Tyr-293 is a substrate binding site. Residue His-334 coordinates Zn(2+). Positions 410, 413, and 417 each coordinate [4Fe-4S] cluster.

The protein belongs to the ThiC family. [4Fe-4S] cluster is required as a cofactor.

The enzyme catalyses 5-amino-1-(5-phospho-beta-D-ribosyl)imidazole + S-adenosyl-L-methionine = 4-amino-2-methyl-5-(phosphooxymethyl)pyrimidine + CO + 5'-deoxyadenosine + formate + L-methionine + 3 H(+). Its pathway is cofactor biosynthesis; thiamine diphosphate biosynthesis. Catalyzes the synthesis of the hydroxymethylpyrimidine phosphate (HMP-P) moiety of thiamine from aminoimidazole ribotide (AIR) in a radical S-adenosyl-L-methionine (SAM)-dependent reaction. In Pyrobaculum aerophilum (strain ATCC 51768 / DSM 7523 / JCM 9630 / CIP 104966 / NBRC 100827 / IM2), this protein is Phosphomethylpyrimidine synthase.